A 674-amino-acid chain; its full sequence is L-type lectin-domain containing receptor kinase IV.3 (674 aa).

A signal peptide spans 1–22; the sequence is MFFKLFTIFFFFIILLSKPLNS. 6 N-linked (GlcNAc...) asparagine glycosylation sites follow: N21, N28, N40, N81, N136, and N188. At 23 to 296 the chain is on the extracellular side; sequence SSQSLNFTYN…TSLQRFYKNR (274 aa). The tract at residues 26–263 is legume-lectin like; it reads SLNFTYNSFH…SEHFVFGWSF (238 aa). The helical transmembrane segment at 297-317 threads the bilayer; the sequence is MPLFSLLLIPVLFVVSLIFLV. Residues 318–674 lie on the Cytoplasmic side of the membrane; it reads RFIVRRRRKF…IAYSIVSGGR (357 aa). The region spanning 355–632 is the Protein kinase domain; that stretch reads FKDKDLLGSG…LQYLRGDATL (278 aa). ATP-binding positions include 361 to 369 and K384; that span reads LGSGGFGRV. The active-site Proton acceptor is the D480.

This sequence in the C-terminal section; belongs to the protein kinase superfamily. Ser/Thr protein kinase family. In the N-terminal section; belongs to the leguminous lectin family.

The protein localises to the cell membrane. The catalysed reaction is L-seryl-[protein] + ATP = O-phospho-L-seryl-[protein] + ADP + H(+). It catalyses the reaction L-threonyl-[protein] + ATP = O-phospho-L-threonyl-[protein] + ADP + H(+). The protein is L-type lectin-domain containing receptor kinase IV.3 (LECRK43) of Arabidopsis thaliana (Mouse-ear cress).